We begin with the raw amino-acid sequence, 482 residues long: Type II methyltransferase M.AvaI (482 aa).

The protein belongs to the N(4)/N(6)-methyltransferase family. N(4) subfamily.

The enzyme catalyses a 2'-deoxycytidine in DNA + S-adenosyl-L-methionine = an N(4)-methyl-2'-deoxycytidine in DNA + S-adenosyl-L-homocysteine + H(+). Functionally, an alpha subtype methylase that recognizes the double-stranded sequence 5'-CYCGRG-3', methylates C-1 on both strands, and protects the DNA from cleavage by the AvaI endonuclease. The protein is Type II methyltransferase M.AvaI of Anabaena variabilis.